The chain runs to 701 residues: Sodium/hydrogen exchanger 6 (701 aa).

2 helical membrane-spanning segments follow: residues 71-91 and 103-123; these read SANL…IWLF and GLAM…IHVP. The N-linked (GlcNAc...) asparagine glycan is linked to asparagine 128. The next 8 helical transmembrane spans lie at 176–196, 211–231, 252–272, 278–298, 324–344, 372–392, 414–434, and 436–456; these read VTFD…FYAG, ILAY…SIMY, CLLF…AIFH, VELY…AIVL, IGIF…TGVV, TFLL…FCGI, FELL…LTLF, and FQNH…IFLG. Residue lysine 475 forms a Glycyl lysine isopeptide (Lys-Gly) (interchain with G-Cter in ubiquitin) linkage. A run of 2 helical transmembrane segments spans residues 479 to 499 and 515 to 535; these read NFQH…ALAI and LLIV…MLSC.

The protein belongs to the monovalent cation:proton antiporter 1 (CPA1) transporter (TC 2.A.36) family. As to quaternary structure, homodimer. Interacts with RACK1; regulates the distribution of SLC9A6 between endosomes and the plasma membrane. Post-translationally, ubiquitinated (in vitro). In terms of processing, glycosylated. As to expression, ubiquitous. High expression in brain, skeletal muscle, and heart, but is also detected at lower levels in most other tissues.

It localises to the endosome membrane. It is found in the recycling endosome membrane. Its subcellular location is the early endosome membrane. The protein resides in the late endosome membrane. The protein localises to the cell membrane. It carries out the reaction Na(+)(in) + H(+)(out) = Na(+)(out) + H(+)(in). It catalyses the reaction K(+)(in) + H(+)(out) = K(+)(out) + H(+)(in). In terms of biological role, endosomal Na(+), K(+)/H(+) antiporter. Mediates the electroneutral exchange of endosomal luminal H(+) for a cytosolic Na(+) or K(+). By facilitating proton efflux, SLC9A6 counteracts the acidity generated by vacuolar (V)-ATPase, thereby limiting luminal acidification. Responsible for alkalizing and maintaining the endosomal pH, and consequently in, e.g., endosome maturation and trafficking of recycling endosomal cargo. Plays a critical role during neurodevelopment by regulating synaptic development and plasticity. Implicated in the maintenance of cell polarity in a manner that is dependent on its ability to modulate intravesicular pH. Regulates intracelular pH in some specialized cells, osteoclasts and stereocilia where this transporter localizes to the plasma membrane. The polypeptide is Sodium/hydrogen exchanger 6 (Homo sapiens (Human)).